We begin with the raw amino-acid sequence, 707 residues long: MSCQISCRSRRGGGGGGGGGFRGFSSGSAVVSGGSRRSNTSFSCISRHGGGRGGSGGGGFGSQSLVGLGGYKSISSSVAGNSGGYGGSSFGGSSGFGGGRGFGGGQGFGGSGGFGGGSGFGGGQGFGGGSRFGGGSGFGGGGFGGGSFGGGRFGGGPGGFGGPGGFPGGGIHEVSVNQSLLQPLDVKVDPEIQNVKSQEREQIKTLNNKFASFIDKVRFLEQQNQVLRTKWELLQQLDVGSRTTNLDPIFQAYIGMLKKQVDRLSAERTSQESELNNMQDLVEDFKKKYEDEINKRTSAENDFVTIKKDVDSCYMDKTELQARLDILAQEVNFLRTLYDAELSQLQQDVTDTNVILSMDNNRNLDLDSIIAEVQNQYEMIAHKSKAESEELYHSKYEELQVTAVKHGDSLKEIKMEISELNRTIQRLQGEISHVKKQCKGVQDSIADAEQRGEHAIKDARGKLTDLEEALQQCREDLARLLRDYQELMNTKLSLDVEIATYRKLLEGEECRMSGDFSDNVSVSITSSTISSSVASKTGFGSGGQSSGGRGSYGGRGGGGGGGSTYGSGGRSSGSRGSGSGSGGGGYSSGGGSRGGSGGGYGSGGGSRGGSGGGYGSGGGSGSGGGYSSGGGSRGGSGGGGVSSGGGSRGGSSSGGGSRGGSSSGGGGYSSGGGSRGGSSSGGAGSSSEKGGSGSGEGCGSGVTFSFR.

Positions 1-20 are disordered; the sequence is MSCQISCRSRRGGGGGGGGG. The interval 1–198 is head; it reads MSCQISCRSR…DPEIQNVKSQ (198 aa). Asymmetric dimethylarginine is present on R22. Residues S25 and S28 each carry the phosphoserine modification. A compositionally biased stretch (low complexity) spans 29–38; the sequence is AVVSGGSRRS. The tract at residues 29-59 is disordered; that stretch reads AVVSGGSRRSNTSFSCISRHGGGRGGSGGGG. R52 bears the Omega-N-methylarginine mark. Phosphoserine is present on S64. A coil 1A region spans residues 199 to 234; the sequence is EREQIKTLNNKFASFIDKVRFLEQQNQVLRTKWELL. An IF rod domain is found at 199–512; it reads EREQIKTLNN…KLLEGEECRM (314 aa). Residues 235–253 are linker 1; it reads QQLDVGSRTTNLDPIFQAY. The segment at 254-345 is coil 1B; the sequence is IGMLKKQVDR…TLYDAELSQL (92 aa). The segment at 346–369 is linker 12; that stretch reads QQDVTDTNVILSMDNNRNLDLDSI. The interval 370–508 is coil 2; it reads IAEVQNQYEM…ATYRKLLEGE (139 aa). A tail region spans residues 509–707; sequence ECRMSGDFSD…CGSGVTFSFR (199 aa). The tract at residues 531 to 707 is disordered; that stretch reads SSVASKTGFG…CGSGVTFSFR (177 aa). Over residues 539-700 the composition is skewed to gly residues; it reads FGSGGQSSGG…GSGSGEGCGS (162 aa). R555, R593, R607, and R675 each carry omega-N-methylarginine.

The protein belongs to the intermediate filament family. As to quaternary structure, heterotetramer of two type I and two type II keratins. Associates with KRT10. As to expression, expressed predominantly in the suprabasal layers of the plantar epidermis outside of the footpads (at protein level). Expressed in the suprabasal layers of the interfollicular epidermis of the ear, in the interscale regions distant from the hair follicles in the tail, and in the soles of the footpads (at protein level). Expressed mainly in the middle spinous and granular cells of the epidermis of adult tail, nipple and footsole skin. Also found in ear.

Its subcellular location is the cytoplasm. Functionally, probably contributes to terminal cornification. Associated with keratinocyte activation, proliferation and keratinization. Required for maintenance of corneocytes and keratin filaments in suprabasal keratinocytes in the epidermis of the ear, potentially via moderation of expression and localization of keratins and their partner proteins. Plays a role in the establishment of the epidermal barrier on plantar skin. The protein is Keratin, type II cytoskeletal 2 epidermal of Mus musculus (Mouse).